A 547-amino-acid chain; its full sequence is CTP synthase (547 aa).

The interval 1–265 (MARFIFITGG…DQAVLDAFGI (265 aa)) is amidoligase domain. A CTP-binding site is contributed by Ser13. Ser13 serves as a coordination point for UTP. ATP contacts are provided by residues 14–19 (SLGKGL) and Asp71. Mg(2+)-binding residues include Asp71 and Glu139. CTP contacts are provided by residues 146-148 (DIE), 186-191 (KTKPTQ), and Lys222. UTP contacts are provided by residues 186–191 (KTKPTQ) and Lys222. Residues 291–546 (KVAIVGKYTQ…VRAAKENSRL (256 aa)) enclose the Glutamine amidotransferase type-1 domain. Gly353 contributes to the L-glutamine binding site. Cys380 acts as the Nucleophile; for glutamine hydrolysis in catalysis. L-glutamine is bound by residues 381-384 (LGMQ), Glu404, and Arg474. Residues His519 and Glu521 contribute to the active site.

The protein belongs to the CTP synthase family. In terms of assembly, homotetramer.

It catalyses the reaction UTP + L-glutamine + ATP + H2O = CTP + L-glutamate + ADP + phosphate + 2 H(+). It carries out the reaction L-glutamine + H2O = L-glutamate + NH4(+). The enzyme catalyses UTP + NH4(+) + ATP = CTP + ADP + phosphate + 2 H(+). It participates in pyrimidine metabolism; CTP biosynthesis via de novo pathway; CTP from UDP: step 2/2. Allosterically activated by GTP, when glutamine is the substrate; GTP has no effect on the reaction when ammonia is the substrate. The allosteric effector GTP functions by stabilizing the protein conformation that binds the tetrahedral intermediate(s) formed during glutamine hydrolysis. Inhibited by the product CTP, via allosteric rather than competitive inhibition. In terms of biological role, catalyzes the ATP-dependent amination of UTP to CTP with either L-glutamine or ammonia as the source of nitrogen. Regulates intracellular CTP levels through interactions with the four ribonucleotide triphosphates. The protein is CTP synthase of Jannaschia sp. (strain CCS1).